The sequence spans 1447 residues: Calcium-dependent secretion activator (1447 aa).

The segment covering 1 to 15 has biased composition (acidic residues); that stretch reads MIDPSSSEEEGEDDA. Disordered stretches follow at residues 1–35 and 101–163; these read MIDP…TSAV and DTGN…EEEE. Composition is skewed to polar residues over residues 18–32 and 111–126; these read NVSS…TKGT and GIPS…QSVG. Over residues 127-144 the composition is skewed to low complexity; the sequence is SSRANSLPRPLSPSPSLT. A compositionally biased stretch (basic and acidic residues) spans 145–163; sequence SEKHETAEPHGKHEREEEE. In terms of domain architecture, C2 spans 417–547; that stretch reads SKYGLQKLKR…PLSSKSPEWH (131 aa). The region spanning 573 to 683 is the PH domain; that stretch reads NMKHCGYLYA…WVMAMYRATG (111 aa). The region spanning 970-1157 is the MHD1 domain; that stretch reads VDMDRVLSEQ…DMIEQCIQRT (188 aa). Residues 1386–1395 show a composition bias toward acidic residues; the sequence is REGEEEDNGD. Positions 1386 to 1406 are disordered; sequence REGEEEDNGDESTSNIPRGLP.

As to expression, restricted to the nervous system at all stages of development and highly localized at synapses (at protein level).

Its subcellular location is the cytoplasmic vesicle membrane. The protein resides in the synapse. Calcium-binding protein involved in exocytosis of vesicles filled with neurotransmitters and neuropeptides. May specifically mediate the Ca(2+)-dependent exocytosis of large dense-core vesicles (DCVs) and other dense-core vesicles. However, it probably also participates in small clear synaptic vesicles (SVs) exocytosis and it is unclear whether its function is related to Ca(2+) triggering. This is Calcium-dependent secretion activator from Drosophila melanogaster (Fruit fly).